The primary structure comprises 521 residues: tRNA (adenine(58)-N(1))-methyltransferase non-catalytic subunit trm6 (521 aa).

3 disordered regions span residues 1–24 (METE…NNNN), 305–336 (IYDK…AKTI), and 452–521 (QKST…KIDE). Positions 12–24 (KSTTSNTNDNNNN) are enriched in low complexity. The segment covering 308-334 (KQVKEKEKEKEKDENVKDEKESGEEAK) has biased composition (basic and acidic residues). Low complexity-rich tracts occupy residues 452–476 (QKST…TKTT) and 487–502 (DATT…AATT). Residues 510–521 (SESALKKRKIDE) are compositionally biased toward basic and acidic residues.

It belongs to the TRM6/GCD10 family. As to quaternary structure, heterotetramer; composed of two copies of trmt6 and two copies of trmt61a.

It localises to the nucleus. In terms of biological role, substrate-binding subunit of tRNA (adenine-N(1)-)-methyltransferase, which catalyzes the formation of N(1)-methyladenine at position 58 (m1A58) in initiator methionyl-tRNA. This is tRNA (adenine(58)-N(1))-methyltransferase non-catalytic subunit trm6 (trmt6) from Dictyostelium discoideum (Social amoeba).